The chain runs to 1338 residues: Centrosomal P4.1-associated protein (1338 aa).

Disordered regions lie at residues 78-99 (QKLESNSPYKPQSDKSETHTGF) and 190-211 (GLSLLPDDQSQKHRSPGNTTTG). 2 positions are modified to phosphoserine: Ser-260 and Ser-317. Residues 320-395 (VANIEERPIK…FTNAKSKFQK (76 aa)) are alpha/beta-tubulin binding. 3 disordered regions span residues 387-415 (TNAKSKFQKGKESKLVTNQSTSEDQPLFK), 437-480 (PILK…QTGK), and 522-552 (QGKDRLPLSTGPASRLAAKSPIRETMKESES). Residues 401-410 (LVTNQSTSED) show a composition bias toward polar residues. A Phosphoserine modification is found at Ser-541. The span at 542–551 (PIRETMKESE) shows a compositional bias: basic and acidic residues. 2 positions are modified to phosphoserine; by PLK2: Ser-590 and Ser-596. 3 disordered regions span residues 612 to 790 (HRMS…LSMS), 846 to 903 (VKRG…DNAR), and 1088 to 1158 (TQVE…HPDG). Residues 636 to 651 (NRSEDLDHTAREKESE) are compositionally biased toward basic and acidic residues. Over residues 680–690 (QKSTSENQTEW) the composition is skewed to polar residues. The segment covering 718–765 (STEDRERGISSREDSPQVCDDKGPFKDTRTQEDKRRDVDLDLSDKDYS) has biased composition (basic and acidic residues). Ser-760 is modified (phosphoserine). Low complexity predominate over residues 781–790 (PSRSSSLSMS). The segment at 896–1338 (QPPGDNARSQ…EGNVLMDTEL (443 aa)) is interaction with STIL.

It belongs to the TCP10 family. In terms of assembly, forms homodimers. Associates with microtubules plus ends; binds to beta-tubulin subunits exposed on microtubule outer surface at its distal tip; also associates with microtubule lattice. Associated with the gamma-tubulin complex. Interacts with the head domain of EPB41. Interacts with LYST. Interacts with CEP152 (via C-terminus). Interacts with STIL. Forms a complex with STIL and SASS6. In terms of processing, phosphorylation at Ser-590 and Ser-596 by PLK2 is required for procentriole formation and centriole elongation. Phosphorylation by PLK2 oscillates during the cell cycle: it increases at G1/S transition and decreases during the exit from mitosis. Phosphorylation at Ser-596 is also mediated by PLK4 but is not a critical step in PLK4 function in procentriole assembly.

The protein localises to the cytoplasm. It localises to the cytoskeleton. Its subcellular location is the microtubule organizing center. The protein resides in the centrosome. It is found in the centriole. Plays an important role in cell division and centrosome function by participating in centriole duplication. Inhibits microtubule nucleation from the centrosome. Involved in the regulation of slow processive growth of centriolar microtubules. Acts as microtubule plus-end tracking protein that stabilizes centriolar microtubules and inhibits microtubule polymerization and extension from the distal ends of centrioles. Required for centriole elongation and for STIL-mediated centriole amplification. Required for the recruitment of CEP295 to the proximal end of new-born centrioles at the centriolar microtubule wall during early S phase in a PLK4-dependent manner. May be involved in the control of centriolar-microtubule growth by acting as a regulator of tubulin release. The chain is Centrosomal P4.1-associated protein (CPAP) from Pan troglodytes (Chimpanzee).